The chain runs to 420 residues: L-glutamine:2-deoxy-scyllo-inosose aminotransferase (420 aa).

The residue at position 201 (Lys-201) is an N6-(pyridoxal phosphate)lysine.

Belongs to the DegT/DnrJ/EryC1 family. L-glutamine:2-deoxy-scyllo-inosose/scyllo-inosose aminotransferase subfamily. The cofactor is pyridoxal 5'-phosphate.

It carries out the reaction 2-deoxy-L-scyllo-inosose + L-glutamine = 2-deoxy-scyllo-inosamine + 2-oxoglutaramate. The catalysed reaction is 3-amino-2,3-dideoxy-scyllo-inosose + L-glutamine = 2-deoxystreptamine + 2-oxoglutaramate. It participates in metabolic intermediate biosynthesis; 2-deoxystreptamine biosynthesis; 2-deoxystreptamine from D-glucose 6-phosphate: step 2/4. The protein operates within antibiotic biosynthesis; gentamicin biosynthesis. Catalyzes the PLP-dependent transamination of 2-deoxy-scyllo-inosose (2-DOI) to form 2-deoxy-scyllo-inosamine (2-DOIA) using L-glutamine as the amino donor. Also catalyzes the transamination of 3-amino-2,3-dideoxy-scyllo-inosose (keto-2-DOIA) into 2-deoxystreptamine (2-DOS). This chain is L-glutamine:2-deoxy-scyllo-inosose aminotransferase (gntA), found in Micromonospora echinospora (Micromonospora purpurea).